A 269-amino-acid polypeptide reads, in one-letter code: Membrane protein insertase YidC 1 (269 aa).

Residues 1–20 (MKKKFSLIAMAGAALLLLTA) form the signal peptide. A lipid anchor (N-palmitoyl cysteine) is attached at Cys-21. Cys-21 carries the S-diacylglycerol cysteine lipid modification. 4 consecutive transmembrane segments (helical) span residues 45–65 (IRFL…TIVI), 124–144 (YMGC…YQAL), 165–185 (PTFI…YLMM), and 203–223 (PIFI…YWVI).

It belongs to the OXA1/ALB3/YidC family. Type 2 subfamily.

It is found in the cell membrane. In terms of biological role, required for the insertion and/or proper folding and/or complex formation of integral membrane proteins into the membrane. Involved in integration of membrane proteins that insert both dependently and independently of the Sec translocase complex, as well as at least some lipoproteins. The sequence is that of Membrane protein insertase YidC 1 from Lactococcus lactis subsp. lactis (strain IL1403) (Streptococcus lactis).